A 159-amino-acid chain; its full sequence is Protein UXT homolog (159 aa).

It belongs to the UXT family.

The chain is Protein UXT homolog from Nematostella vectensis (Starlet sea anemone).